A 698-amino-acid chain; its full sequence is Endogenous retrovirus group K member 9 Env polyprotein (698 aa).

The segment at 1–47 is disordered; the sequence is MNPSEMQRKAPPRRRRHRNRAPLTHKMNKMVTSEEQMKLPSTKKAEP. An N-terminal signal peptide occupies residues 1–89; sequence MNPSEMQRKA…ALMIVSMVVS (89 aa). Residues 10–20 are compositionally biased toward basic residues; that stretch reads APPRRRRHRNR. The Extracellular segment spans residues 90 to 631; that stretch reads LPMPAGAAAA…NLNPVTWVKT (542 aa). N-linked (GlcNAc...) asparagine glycosylation is found at Asn-100, Asn-128, Asn-153, Asn-273, Asn-354, Asn-371, and Asn-460. Residues 465–485 form a fusion peptide region; that stretch reads FIFTLIAVIMGLIAVTATAAV. Residues Asn-506, Asn-553, Asn-565, and Asn-584 are each glycosylated (N-linked (GlcNAc...) asparagine). A helical transmembrane segment spans residues 632–652; the sequence is IGSTTIINLILILVCLFCLLL. Topologically, residues 653-698 are cytoplasmic; the sequence is VCRCTQQLRRDSDHRERAMMTMAVLSKRKGGNVGKSKRDQIVTVSV.

The protein belongs to the beta type-B retroviral envelope protein family. HERV class-II K(HML-2) env subfamily. As to quaternary structure, the surface (SU) and transmembrane (TM) proteins form a heterodimer. SU and TM are attached by noncovalent interactions or by a labile interchain disulfide bond. In terms of processing, specific enzymatic cleavages in vivo yield the mature SU and TM proteins.

Its subcellular location is the cell membrane. It is found in the virion. In terms of biological role, retroviral envelope proteins mediate receptor recognition and membrane fusion during early infection. Endogenous envelope proteins may have kept, lost or modified their original function during evolution. This endogenous envelope protein has lost its original fusogenic properties. SU mediates receptor recognition. Functionally, TM anchors the envelope heterodimer to the viral membrane through one transmembrane domain. The other hydrophobic domain, called fusion peptide, mediates fusion of the viral membrane with the target cell membrane. The chain is Endogenous retrovirus group K member 9 Env polyprotein (ERVK-9) from Homo sapiens (Human).